The sequence spans 21 residues: Protein IroK (21 aa).

Its function is as follows. Possible increased expression of this protein (due to mutations upstream of the start codon) is proposed to be responsible for resistance to 3-hydroxypropionic acid (3-HP). The protein is Protein IroK (iroK) of Escherichia coli (strain K12).